The chain runs to 149 residues: Myoglobin (149 aa).

T2 carries the post-translational modification N-acetylthreonine. Residues 2-143 (TEWEHVNKVW…ICSDLETLYK (142 aa)) form the Globin domain. Residue H60 coordinates nitrite. O2 is bound at residue H60. H89 is a binding site for heme b.

The protein belongs to the globin family. In terms of assembly, monomeric.

It is found in the cytoplasm. The protein resides in the sarcoplasm. It carries out the reaction Fe(III)-heme b-[protein] + nitric oxide + H2O = Fe(II)-heme b-[protein] + nitrite + 2 H(+). The catalysed reaction is H2O2 + AH2 = A + 2 H2O. In terms of biological role, monomeric heme protein which primary function is to store oxygen and facilitate its diffusion within muscle tissues. Reversibly binds oxygen through a pentacoordinated heme iron and enables its timely and efficient release as needed during periods of heightened demand. Depending on the oxidative conditions of tissues and cells, and in addition to its ability to bind oxygen, it also has a nitrite reductase activity whereby it regulates the production of bioactive nitric oxide. Under stress conditions, like hypoxia and anoxia, it also protects cells against reactive oxygen species thanks to its pseudoperoxidase activity. This is Myoglobin (mb) from Heterodontus portusjacksoni (Port Jackson shark).